We begin with the raw amino-acid sequence, 446 residues long: Maltoporin (446 aa).

Positions 1–25 (MMITLRKLPLAVAVAAGVMSAQAMA) are cleaved as a signal peptide.

This sequence belongs to the porin LamB (TC 1.B.3) family. In terms of assembly, homotrimer formed of three 18-stranded antiparallel beta-barrels, containing three independent channels.

It is found in the cell outer membrane. The enzyme catalyses beta-maltose(in) = beta-maltose(out). Its function is as follows. Involved in the transport of maltose and maltodextrins. In Escherichia coli (strain SE11), this protein is Maltoporin.